The chain runs to 177 residues: HVA22-like protein a (177 aa).

Transmembrane regions (helical) follow at residues 18–38 (VLAGPVVSLVYPLYASVQAIE), 47–67 (QWLTYWVLYSLLTLIELTFAK), and 68–88 (LIEWLPIWSYMKLILTCWLVI).

Belongs to the DP1 family. Predominantly expressed in flower buds and stem.

The protein resides in the membrane. This Arabidopsis thaliana (Mouse-ear cress) protein is HVA22-like protein a (HVA22A).